Here is a 1117-residue protein sequence, read N- to C-terminus: Protein cup (1117 aa).

The tract at residues 1–106 (MQMAEAEQEN…PPPPPPLPTS (106 aa)) is disordered. Pro residues-rich tracts occupy residues 54–64 (YPPPPPPPTPV) and 95–104 (CAPPPPPPLP). A phosphoserine mark is found at S263 and S270. Positions 270–326 (SPRKQVASKEAVPEQQSSQVQQKRPPSTGIHKPGSLRAPKAVRPTTAPVVSSKPVKS) are disordered. Polar residues predominate over residues 283–294 (EQQSSQVQQKRP). The YXXXXLphi motif 1 motif lies at 327-333 (YTRSRLM). 2 positions are modified to phosphoserine: S347 and S350. The short motif at 363-369 (ELEGRLR) is the YXXXXLphi motif 2 element. Disordered stretches follow at residues 493–528 (ISSQ…EDLS), 596–618 (KEGN…KMDH), 654–673 (TEHQ…SFQF), 679–728 (SQQN…SSSS), 984–1004 (GAKH…QARP), and 1016–1051 (ISGG…FQSF). T503 carries the phosphothreonine modification. Phosphoserine is present on residues S509, S513, S520, S523, and S524. 2 stretches are compositionally biased toward low complexity: residues 679–712 (SQQN…NTNN) and 988–1001 (QAQQ…QQRQ).

The protein belongs to the 4E-T/EIF4E-T family. In terms of assembly, component of the osk RNP complex, which is composed of at least exu, yps, aret/bruno, cup, and the mRNA of osk. Interacts with the decapping activators me31B and tral. Component of the nanos RNP complex, which is composed of at least smg, cup, tral, me31B, the CCR4-NOT complex members Rga/NOT2 and Caf1, and the mRNA of nanos (nos). Interacts with btz. Recruited to the 3'-UTR of nos and osk mRNAs by smg and btz, respectively. Forms a ribonucleoprotein complex (RNP) containing at least me31B, eIF4E1, cup, tral and pAbp; this interaction is required for the translational silencing of maternal mRNAs during the maternal-to-zygotic transition. No interaction was detected with pAbp in 1-5 hour embryos. Interacts with osk and vas. Interacts with Pop2, twin/CCR4, Rga, Not3 and Not1 which are all core components of the CCR4-NOT deadenylase complex; interaction with the complex is required for cup deadenylation activity. Interacts with nanos. Interacts with smg. Interacts (via YXXXXLphi motifs) with eIF4E1; the interaction promotes retention of cup in the cytoplasm. Interacts with orb; the interaction represses the orb positive autoregulatory loop. Interacts with Nup154. As to expression, predominantly expressed in ovaries and in 0-2 hours old embryos. Weakly expressed in testis. Expressed in young embryos through stage 9, then it decreases throughout the rest of embryogenesis. In ovaries, it is expressed in germ cells throughout pre-vitellogenic development, but is not expressed in the somatic follicle cells. In germarial cysts, the protein (and not the transcripts) is transported selectively into the oocyte.

Its subcellular location is the cytoplasm. It localises to the nucleus. The protein resides in the cytoplasmic ribonucleoprotein granule. In terms of biological role, adapter protein that plays a central role in localization of transcripts in the oocyte and in young embryos. Maintains RNA targets in a repressed state by promoting their deadenylation and protects deadenylated mRNAs from further degradation. Binds to and recruits eIF-4E to the 3'-UTR of some mRNA targets which prevents interaction between eIF4E1 and eIF4G. This may contribute to translational repression but does not appear to be necessary for it to occur. Can promote translational repression independently of deadenylation and eIF4E1 binding. Required for correct localization of eIF4E1 in the developing oocyte. Required for translational repression of oskar (osk) mRNA. Also required for the translational repression of nanos (nos) mRNA. Promotes the accumulation of the germ plasm components osk, vas and stau at the posterior pole of the oocyte and is required for germ cell development. Represses orb positive autoregulatory activity which prevents premature activation of orb and ensures its accumulation specifically in the developing oocyte. In 0-1 hour embryos, forms a complex with me31B, cup, tral and pAbp which binds to various mRNAs including maternal mRNAs, and down-regulates their expression during the maternal-to-zygotic transition. The chain is Protein cup (cup) from Drosophila melanogaster (Fruit fly).